A 1021-amino-acid chain; its full sequence is Transmembrane protein 132A (1021 aa).

The N-terminal stretch at methionine 1–serine 32 is a signal peptide. Topologically, residues asparagine 33–alanine 848 are extracellular. A disordered region spans residues proline 207–glutamine 226. N-linked (GlcNAc...) asparagine glycosylation is present at asparagine 276. Positions isoleucine 606–proline 913 are binds to HSPA5/GRP78. A confers cellular localization similar to full-length form region spans residues leucine 666–serine 1021. The segment at alanine 793–alanine 835 is disordered. Basic and acidic residues predominate over residues glycine 806–asparagine 820. Acidic residues predominate over residues glutamate 821 to methionine 832. Residues leucine 849–leucine 869 form a helical membrane-spanning segment. The Cytoplasmic segment spans residues arginine 870–serine 1021. The segment at arginine 903–glycine 955 is disordered. A compositionally biased stretch (polar residues) spans aspartate 929 to leucine 948.

This sequence belongs to the TMEM132 family. In terms of assembly, interacts with HSPA5/GRP78. In terms of tissue distribution, expressed in the brain in neuronal cells of the hypothalamus, thalamus, cerebral cortex, amygdala, and cerebellum.

The protein resides in the golgi apparatus membrane. It is found in the endoplasmic reticulum membrane. May play a role in embryonic and postnatal development of the brain. Increased resistance to cell death induced by serum starvation in cultured cells. Regulates cAMP-induced GFAP gene expression via STAT3 phosphorylation. The protein is Transmembrane protein 132A (Tmem132a) of Rattus norvegicus (Rat).